A 300-amino-acid chain; its full sequence is Inosose dehydratase (300 aa).

This sequence belongs to the IolE/MocC family. Glutathione is required as a cofactor. Co(2+) serves as cofactor. It depends on Mn(2+) as a cofactor.

It catalyses the reaction scyllo-inosose = 3D-3,5/4-trihydroxycyclohexane-1,2-dione + H2O. Its function is as follows. Catalyzes the dehydration of inosose (2-keto-myo-inositol, 2KMI or 2,4,6/3,5-pentahydroxycyclohexanone) to 3D-(3,5/4)-trihydroxycyclohexane-1,2-dione (D-2,3-diketo-4-deoxy-epi-inositol). The chain is Inosose dehydratase from Mesomycoplasma hyopneumoniae (strain J / ATCC 25934 / NCTC 10110) (Mycoplasma hyopneumoniae).